The primary structure comprises 231 residues: Ion-translocating oxidoreductase complex subunit E (231 aa).

The next 6 helical transmembrane spans lie at 18–38 (ALVQ…ATNA), 39–59 (LGLG…ISTL), 63–83 (TPSE…VSAV), 86–106 (LINA…PLIV), 125–145 (ALSA…MFVL), and 182–202 (PFLL…MLAG).

Belongs to the NqrDE/RnfAE family. As to quaternary structure, the complex is composed of six subunits: RsxA, RsxB, RsxC, RsxD, RsxE and RsxG.

The protein resides in the cell inner membrane. Functionally, part of a membrane-bound complex that couples electron transfer with translocation of ions across the membrane. Required to maintain the reduced state of SoxR. The polypeptide is Ion-translocating oxidoreductase complex subunit E (Escherichia coli O6:K15:H31 (strain 536 / UPEC)).